We begin with the raw amino-acid sequence, 624 residues long: Glycosyltransferase AglD (624 aa).

D201 is a catalytic residue. 8 helical membrane passes run V260–I280, V285–V305, L381–L401, A427–L447, V496–L518, F532–G552, I556–A576, and V587–V607.

Belongs to the glycosyltransferase 2 family.

It localises to the cell membrane. The protein operates within cell surface structure biogenesis; S-layer biogenesis. Its function is as follows. Involved in the assembly of a N-linked pentasaccharide that decorates the S-layer glycoprotein and flagellins. Catalyzes the addition of the mannose found at position 5 of the pentasaccharide to its own distinct dolichol phosphate carrier. The protein is Glycosyltransferase AglD (aglD) of Haloferax volcanii (strain ATCC 29605 / DSM 3757 / JCM 8879 / NBRC 14742 / NCIMB 2012 / VKM B-1768 / DS2) (Halobacterium volcanii).